Here is a 362-residue protein sequence, read N- to C-terminus: MSPPDRPQRLVEQDRIGGDAAEASIRPLSLAEFIGQRQVRENLSVFIQAARGRKEALDHVLLFGPPGLGKTTLAQIVAKELNVGFRATSGPVIAKAGDLAALLTNLQPHDVLFIDEIHRLSPAVEEILYPAMEDFQLDLIIGEGPAARSVRIDLPPFTLVGATTRSGLITRPLRERFGIPLRMQFYEPEELQLIVARGARILGMELTGEGALEIARRSRGTPRVAGRLLRRVRDICGVAGLAVVDAAAAGGALTRLEVDRLGFDAMDRRYLRCIADNYGGGPVGVETLGAALGEQRDVLEETIEPYLIQQGLLQRTPRGRLLTDSGYRYLGLPPPATPARQLDLLGGAGPGGGTPEGEGEDV.

A large ATPase domain (RuvB-L) region spans residues 4 to 186; that stretch reads PDRPQRLVEQ…FGIPLRMQFY (183 aa). ATP contacts are provided by residues Ile25, Arg26, Gly67, Lys70, Thr71, Thr72, 133–135, Arg176, Tyr186, and Arg223; that span reads EDF. Position 71 (Thr71) interacts with Mg(2+). A small ATPAse domain (RuvB-S) region spans residues 187-257; the sequence is EPEELQLIVA…AAGGALTRLE (71 aa). Residues 260–362 form a head domain (RuvB-H) region; that stretch reads RLGFDAMDRR…GTPEGEGEDV (103 aa). Residues Arg296, Arg315, and Arg320 each coordinate DNA.

The protein belongs to the RuvB family. Homohexamer. Forms an RuvA(8)-RuvB(12)-Holliday junction (HJ) complex. HJ DNA is sandwiched between 2 RuvA tetramers; dsDNA enters through RuvA and exits via RuvB. An RuvB hexamer assembles on each DNA strand where it exits the tetramer. Each RuvB hexamer is contacted by two RuvA subunits (via domain III) on 2 adjacent RuvB subunits; this complex drives branch migration. In the full resolvosome a probable DNA-RuvA(4)-RuvB(12)-RuvC(2) complex forms which resolves the HJ.

The protein resides in the cytoplasm. The catalysed reaction is ATP + H2O = ADP + phosphate + H(+). The RuvA-RuvB-RuvC complex processes Holliday junction (HJ) DNA during genetic recombination and DNA repair, while the RuvA-RuvB complex plays an important role in the rescue of blocked DNA replication forks via replication fork reversal (RFR). RuvA specifically binds to HJ cruciform DNA, conferring on it an open structure. The RuvB hexamer acts as an ATP-dependent pump, pulling dsDNA into and through the RuvAB complex. RuvB forms 2 homohexamers on either side of HJ DNA bound by 1 or 2 RuvA tetramers; 4 subunits per hexamer contact DNA at a time. Coordinated motions by a converter formed by DNA-disengaged RuvB subunits stimulates ATP hydrolysis and nucleotide exchange. Immobilization of the converter enables RuvB to convert the ATP-contained energy into a lever motion, pulling 2 nucleotides of DNA out of the RuvA tetramer per ATP hydrolyzed, thus driving DNA branch migration. The RuvB motors rotate together with the DNA substrate, which together with the progressing nucleotide cycle form the mechanistic basis for DNA recombination by continuous HJ branch migration. Branch migration allows RuvC to scan DNA until it finds its consensus sequence, where it cleaves and resolves cruciform DNA. The chain is Holliday junction branch migration complex subunit RuvB from Rhodospirillum centenum (strain ATCC 51521 / SW).